The following is a 152-amino-acid chain: 3-hydroxyacyl-[acyl-carrier-protein] dehydratase FabZ (152 aa).

The active site involves His-58.

Belongs to the thioester dehydratase family. FabZ subfamily.

The protein resides in the cytoplasm. It catalyses the reaction a (3R)-hydroxyacyl-[ACP] = a (2E)-enoyl-[ACP] + H2O. Involved in unsaturated fatty acids biosynthesis. Catalyzes the dehydration of short chain beta-hydroxyacyl-ACPs and long chain saturated and unsaturated beta-hydroxyacyl-ACPs. The protein is 3-hydroxyacyl-[acyl-carrier-protein] dehydratase FabZ of Prochlorococcus marinus (strain AS9601).